We begin with the raw amino-acid sequence, 458 residues long: ATP synthase subunit beta (458 aa).

148–155 (GGAGVGKT) lines the ATP pocket.

It belongs to the ATPase alpha/beta chains family. As to quaternary structure, F-type ATPases have 2 components, CF(1) - the catalytic core - and CF(0) - the membrane proton channel. CF(1) has five subunits: alpha(3), beta(3), gamma(1), delta(1), epsilon(1). CF(0) has three main subunits: a(1), b(2) and c(9-12). The alpha and beta chains form an alternating ring which encloses part of the gamma chain. CF(1) is attached to CF(0) by a central stalk formed by the gamma and epsilon chains, while a peripheral stalk is formed by the delta and b chains.

The protein localises to the cell inner membrane. It catalyses the reaction ATP + H2O + 4 H(+)(in) = ADP + phosphate + 5 H(+)(out). Functionally, produces ATP from ADP in the presence of a proton gradient across the membrane. The catalytic sites are hosted primarily by the beta subunits. The chain is ATP synthase subunit beta from Francisella philomiragia subsp. philomiragia (strain ATCC 25017 / CCUG 19701 / FSC 153 / O#319-036).